The primary structure comprises 346 residues: NADH-ubiquinone oxidoreductase chain 2 (346 aa).

10 consecutive transmembrane segments (helical) span residues 25 to 45, 56 to 76, 94 to 114, 122 to 142, 148 to 168, 178 to 198, 200 to 220, 240 to 260, 278 to 298, and 325 to 345; these read NLLL…PLLA, ATKY…VIIL, LLNM…FHYW, IPLH…LSIL, LLNP…GAWG, IMAY…PYNP, LTLL…ITLM, ILTM…LTGF, LSTL…RLIY, and FILP…SQLI.

Belongs to the complex I subunit 2 family. In terms of assembly, core subunit of respiratory chain NADH dehydrogenase (Complex I) which is composed of 45 different subunits. Interacts with TMEM242.

It localises to the mitochondrion inner membrane. It carries out the reaction a ubiquinone + NADH + 5 H(+)(in) = a ubiquinol + NAD(+) + 4 H(+)(out). Its function is as follows. Core subunit of the mitochondrial membrane respiratory chain NADH dehydrogenase (Complex I) which catalyzes electron transfer from NADH through the respiratory chain, using ubiquinone as an electron acceptor. Essential for the catalytic activity and assembly of complex I. The polypeptide is NADH-ubiquinone oxidoreductase chain 2 (Rattus norvegicus (Rat)).